The chain runs to 43 residues: Protein PsbN (43 aa).

A helical transmembrane segment spans residues 7-29 (IVIFVSSLLLGITTYSVYTAFGP).

It belongs to the PsbN family.

It is found in the plastid. It localises to the chloroplast thylakoid membrane. In terms of biological role, may play a role in photosystem I and II biogenesis. The chain is Protein PsbN from Phaeodactylum tricornutum (strain CCAP 1055/1).